Here is a 548-residue protein sequence, read N- to C-terminus: Lysine--tRNA ligase (548 aa).

Residues 43-51 (PSGVPHLGN) carry the 'HIGH' region motif. The 'KMSKS' region signature appears at 308-312 (PFSSS).

Belongs to the class-I aminoacyl-tRNA synthetase family.

The protein localises to the cytoplasm. The enzyme catalyses tRNA(Lys) + L-lysine + ATP = L-lysyl-tRNA(Lys) + AMP + diphosphate. This Halobacterium salinarum (strain ATCC 700922 / JCM 11081 / NRC-1) (Halobacterium halobium) protein is Lysine--tRNA ligase.